The sequence spans 88 residues: Putative transmembrane protein ORF24 (88 aa).

A run of 3 helical transmembrane segments spans residues 16-36 (LNMG…WAGM), 42-62 (AVFV…VTQF), and 64-84 (FIWF…VASI).

The protein resides in the host membrane. This is Putative transmembrane protein ORF24 from Haloarcula hispanica (His1V).